A 154-amino-acid chain; its full sequence is Large ribosomal subunit protein uL11 (154 aa).

This sequence belongs to the universal ribosomal protein uL11 family. In terms of assembly, part of the ribosomal stalk of the 50S ribosomal subunit. Interacts with L10 and the large rRNA to form the base of the stalk. L10 forms an elongated spine to which L12 dimers bind in a sequential fashion forming a multimeric L10(L12)X complex. In terms of processing, one or more lysine residues are methylated.

Functionally, forms part of the ribosomal stalk which helps the ribosome interact with GTP-bound translation factors. In Leuconostoc mesenteroides subsp. mesenteroides (strain ATCC 8293 / DSM 20343 / BCRC 11652 / CCM 1803 / JCM 6124 / NCDO 523 / NBRC 100496 / NCIMB 8023 / NCTC 12954 / NRRL B-1118 / 37Y), this protein is Large ribosomal subunit protein uL11.